The sequence spans 227 residues: Uracil-DNA glycosylase (227 aa).

D64 (proton acceptor) is an active-site residue.

Belongs to the uracil-DNA glycosylase (UDG) superfamily. UNG family.

It is found in the cytoplasm. It carries out the reaction Hydrolyzes single-stranded DNA or mismatched double-stranded DNA and polynucleotides, releasing free uracil.. Its function is as follows. Excises uracil residues from the DNA which can arise as a result of misincorporation of dUMP residues by DNA polymerase or due to deamination of cytosine. This Serratia proteamaculans (strain 568) protein is Uracil-DNA glycosylase.